A 58-amino-acid polypeptide reads, in one-letter code: Large ribosomal subunit protein bL32 (58 aa).

This sequence belongs to the bacterial ribosomal protein bL32 family.

This is Large ribosomal subunit protein bL32 from Prochlorococcus marinus (strain MIT 9303).